The sequence spans 408 residues: Protein SPATA31F3 (408 aa).

The chain crosses the membrane as a helical span at residues 11–31 (VGYPFYTYGSIIIIALIIWQV). Residues 51–71 (QKVKQRAKEKTPRARRHSRKE) are disordered. Ser-152 bears the Phosphoserine mark. Disordered stretches follow at residues 297–316 (TKTK…MKGA) and 351–408 (LPLS…SASS). Positions 351-392 (LPLSSGSSKRSPLLTCATQPENPSHVSVSTSAEGTCLPQEST) are enriched in polar residues.

This sequence belongs to the SPATA31 family.

The protein localises to the membrane. This Bos taurus (Bovine) protein is Protein SPATA31F3 (SPATA31F3).